Reading from the N-terminus, the 136-residue chain is uncharacterized protein (136 aa).

Disordered stretches follow at residues 58–82 (TSDD…TTQT) and 112–136 (NNPK…VVTQ).

This is an uncharacterized protein from Dictyostelium discoideum (Social amoeba).